A 167-amino-acid chain; its full sequence is Small heat shock protein C1 (167 aa).

One can recognise a sHSP domain in the interval 59–167 (PFYESNSIKS…EQDAKEIPIN (109 aa)).

This sequence belongs to the small heat shock protein (HSP20) family.

This chain is Small heat shock protein C1 (hspC1), found in Rickettsia bellii (strain RML369-C).